A 284-amino-acid chain; its full sequence is 2-dehydro-3-deoxyphosphooctonate aldolase (284 aa).

Belongs to the KdsA family.

It is found in the cytoplasm. The enzyme catalyses D-arabinose 5-phosphate + phosphoenolpyruvate + H2O = 3-deoxy-alpha-D-manno-2-octulosonate-8-phosphate + phosphate. Its pathway is carbohydrate biosynthesis; 3-deoxy-D-manno-octulosonate biosynthesis; 3-deoxy-D-manno-octulosonate from D-ribulose 5-phosphate: step 2/3. It functions in the pathway bacterial outer membrane biogenesis; lipopolysaccharide biosynthesis. In Actinobacillus pleuropneumoniae serotype 7 (strain AP76), this protein is 2-dehydro-3-deoxyphosphooctonate aldolase.